A 273-amino-acid chain; its full sequence is Thiazole synthase (273 aa).

The active-site Schiff-base intermediate with DXP is the lysine 113. 1-deoxy-D-xylulose 5-phosphate is bound by residues glycine 174, 201-202 (AG), and 223-224 (NT).

This sequence belongs to the ThiG family. As to quaternary structure, homotetramer. Forms heterodimers with either ThiH or ThiS.

Its subcellular location is the cytoplasm. The catalysed reaction is [ThiS sulfur-carrier protein]-C-terminal-Gly-aminoethanethioate + 2-iminoacetate + 1-deoxy-D-xylulose 5-phosphate = [ThiS sulfur-carrier protein]-C-terminal Gly-Gly + 2-[(2R,5Z)-2-carboxy-4-methylthiazol-5(2H)-ylidene]ethyl phosphate + 2 H2O + H(+). Its pathway is cofactor biosynthesis; thiamine diphosphate biosynthesis. Catalyzes the rearrangement of 1-deoxy-D-xylulose 5-phosphate (DXP) to produce the thiazole phosphate moiety of thiamine. Sulfur is provided by the thiocarboxylate moiety of the carrier protein ThiS. In vitro, sulfur can be provided by H(2)S. This chain is Thiazole synthase, found in Salinibacter ruber (strain DSM 13855 / M31).